Reading from the N-terminus, the 166-residue chain is Large ribosomal subunit protein uL10 (166 aa).

Belongs to the universal ribosomal protein uL10 family. As to quaternary structure, part of the ribosomal stalk of the 50S ribosomal subunit. The N-terminus interacts with L11 and the large rRNA to form the base of the stalk. The C-terminus forms an elongated spine to which L12 dimers bind in a sequential fashion forming a multimeric L10(L12)X complex.

In terms of biological role, forms part of the ribosomal stalk, playing a central role in the interaction of the ribosome with GTP-bound translation factors. The chain is Large ribosomal subunit protein uL10 from Shewanella amazonensis (strain ATCC BAA-1098 / SB2B).